Reading from the N-terminus, the 785-residue chain is Endonuclease MutS2 (785 aa).

335 to 342 (GPNTGGKT) contacts ATP. Residues 710 to 785 (LDLRGERYED…GNGVTIVEFK (76 aa)) enclose the Smr domain.

This sequence belongs to the DNA mismatch repair MutS family. MutS2 subfamily. Homodimer. Binds to stalled ribosomes, contacting rRNA.

Endonuclease that is involved in the suppression of homologous recombination and thus may have a key role in the control of bacterial genetic diversity. In terms of biological role, acts as a ribosome collision sensor, splitting the ribosome into its 2 subunits. Detects stalled/collided 70S ribosomes which it binds and splits by an ATP-hydrolysis driven conformational change. Acts upstream of the ribosome quality control system (RQC), a ribosome-associated complex that mediates the extraction of incompletely synthesized nascent chains from stalled ribosomes and their subsequent degradation. Probably generates substrates for RQC. This Listeria welshimeri serovar 6b (strain ATCC 35897 / DSM 20650 / CCUG 15529 / CIP 8149 / NCTC 11857 / SLCC 5334 / V8) protein is Endonuclease MutS2.